We begin with the raw amino-acid sequence, 585 residues long: YTH domain-containing family protein 3 (585 aa).

Disordered regions lie at residues 1-52 (MSAT…YPPM), 243-277 (RKPA…MNIG), and 304-351 (PQPL…QQLQ). An N-acetylserine modification is found at serine 2. The segment covering 15-24 (NKVSVQNGSI) has biased composition (polar residues). Phosphoserine is present on serine 23. The span at 244 to 254 (KPAKPQPKLKP) shows a compositional bias: basic residues. Over residues 329–351 (QQQQGPQPQAQPHQVQPQQQQLQ) the composition is skewed to low complexity. The YTH domain occupies 416–550 (GRVFIIKSYS…EKAKQVLKII (135 aa)). RNA-binding positions include 422–424 (KSY), aspartate 428, 438–439 (WC), asparagine 468, tryptophan 492, and tryptophan 497.

It belongs to the YTHDF family. YTHDF3 subfamily. In terms of assembly, interacts with CNOT1; promoting recruitment of the CCR4-NOT complex. Interacts with YTHDF1. Interacts with YTHDF2. Interacts with PAN3. Post-translationally, (Microbial infection) Proteolytically cleaved by HIV-1 protease when incorporated into HIV-1 particles in a nucleocapsid-dependent-manner. Cleavage by HIV-1 protease probably ensures optimal infectivity of the mature virion.

Its subcellular location is the cytoplasm. It is found in the cytosol. The protein resides in the P-body. It localises to the stress granule. Specifically recognizes and binds N6-methyladenosine (m6A)-containing RNAs, and regulates their stability. M6A is a modification present at internal sites of mRNAs and some non-coding RNAs and plays a role in mRNA stability and processing. Acts as a regulator of mRNA stability by promoting degradation of m6A-containing mRNAs via interaction with the CCR4-NOT complex or PAN3. The YTHDF paralogs (YTHDF1, YTHDF2 and YTHDF3) share m6A-containing mRNAs targets and act redundantly to mediate mRNA degradation and cellular differentiation. Acts as a negative regulator of type I interferon response by down-regulating interferon-stimulated genes (ISGs) expression: acts by binding to FOXO3 mRNAs. Binds to FOXO3 mRNAs independently of METTL3-mediated m6A modification. Can also act as a regulator of mRNA stability in cooperation with YTHDF2 by binding to m6A-containing mRNA and promoting their degradation. Recognizes and binds m6A-containing circular RNAs (circRNAs); circRNAs are generated through back-splicing of pre-mRNAs, a non-canonical splicing process promoted by dsRNA structures across circularizing exons. Promotes formation of phase-separated membraneless compartments, such as P-bodies or stress granules, by undergoing liquid-liquid phase separation upon binding to mRNAs containing multiple m6A-modified residues: polymethylated mRNAs act as a multivalent scaffold for the binding of YTHDF proteins, juxtaposing their disordered regions and thereby leading to phase separation. The resulting mRNA-YTHDF complexes then partition into different endogenous phase-separated membraneless compartments, such as P-bodies, stress granules or neuronal RNA granules. May also recognize and bind N1-methyladenosine (m1A)-containing mRNAs: inhibits trophoblast invasion by binding to m1A-methylated transcripts of IGF1R, promoting their degradation. Its function is as follows. Has some antiviral activity against HIV-1 virus: incorporated into HIV-1 particles in a nucleocapsid-dependent manner and reduces viral infectivity in the next cycle of infection. May interfere with this early step of the viral life cycle by binding to N6-methyladenosine (m6A) modified sites on the HIV-1 RNA genome. In Homo sapiens (Human), this protein is YTH domain-containing family protein 3.